The following is a 430-amino-acid chain: Enolase (430 aa).

Glutamine 166 provides a ligand contact to (2R)-2-phosphoglycerate. Glutamate 208 serves as the catalytic Proton donor. The Mg(2+) site is built by aspartate 245, glutamate 288, and aspartate 315. Residues lysine 340, arginine 369, serine 370, and lysine 391 each coordinate (2R)-2-phosphoglycerate. Catalysis depends on lysine 340, which acts as the Proton acceptor.

This sequence belongs to the enolase family. Mg(2+) serves as cofactor.

Its subcellular location is the cytoplasm. The protein localises to the secreted. It localises to the cell surface. The catalysed reaction is (2R)-2-phosphoglycerate = phosphoenolpyruvate + H2O. Its pathway is carbohydrate degradation; glycolysis; pyruvate from D-glyceraldehyde 3-phosphate: step 4/5. In terms of biological role, catalyzes the reversible conversion of 2-phosphoglycerate (2-PG) into phosphoenolpyruvate (PEP). It is essential for the degradation of carbohydrates via glycolysis. This is Enolase from Clostridium kluyveri (strain NBRC 12016).